Here is a 462-residue protein sequence, read N- to C-terminus: MTSNANQYTWAGRFSEPVSDLVKRYTASVDFDQRMWRQDIRGSLAHARMLAKQGIIAAADLADIERGMAIVTEEIESGKFEWSLDLEDVHLNIEKRLTALVGDAGKRLHTGRSRNDQVATDIRLYLRDSIDDILVLIKAFRSALVDLAEKEAATPMPGFTHLQVAQPVTFGHHMLAYFEMFGRDAERYADCRKRVARLPLGAAALAGTTYPIDRAYVAEQLGFEGVCENSLDAVSDRDFAIEFTAACALLMMHISRLSEELVMWMSPRIGFIQIADRFCTGSSIMPQKKNPDVPELARGKTGRVYGQLMSLLTLMKSQPLAYNKDNQEDKEPLFDAVDTVTDTLRIFADMAGGITVRADNMKAALTQGFATATDLADYLVKKGLPFRDAHEAVGHAVKAAEQKGVDLPQLTLDELKAFCPQVESDVFAVLTVEGSLASRNHIGGTAPEQVRAAVARARQRLS.

The protein belongs to the lyase 1 family. Argininosuccinate lyase subfamily.

The protein resides in the cytoplasm. The enzyme catalyses 2-(N(omega)-L-arginino)succinate = fumarate + L-arginine. The protein operates within amino-acid biosynthesis; L-arginine biosynthesis; L-arginine from L-ornithine and carbamoyl phosphate: step 3/3. This chain is Argininosuccinate lyase, found in Dechloromonas aromatica (strain RCB).